The following is a 157-amino-acid chain: UPF0262 protein Atu0536 (157 aa).

Belongs to the UPF0262 family.

The protein is UPF0262 protein Atu0536 of Agrobacterium fabrum (strain C58 / ATCC 33970) (Agrobacterium tumefaciens (strain C58)).